The primary structure comprises 941 residues: Bifunctional uridylyltransferase/uridylyl-removing enzyme (941 aa).

The tract at residues 1-372 is uridylyltransferase; it reads MAKHDLSDAT…RFAHRPRRIP (372 aa). The segment at 373–728 is uridylyl-removing; sequence GTPEFIEDRG…VRTHSFHAIT (356 aa). Positions 489–611 constitute an HD domain; that stretch reads VDEHLIRSVG…VQSLDRLRML (123 aa). ACT domains lie at 729-810 and 840-919; these read EITV…EVIA and VIEI…LREQ. The tract at residues 916-941 is disordered; sequence LREQMPSGIIAPAATKSPAAEKKARV.

It belongs to the GlnD family. The cofactor is Mg(2+).

The catalysed reaction is [protein-PII]-L-tyrosine + UTP = [protein-PII]-uridylyl-L-tyrosine + diphosphate. It carries out the reaction [protein-PII]-uridylyl-L-tyrosine + H2O = [protein-PII]-L-tyrosine + UMP + H(+). With respect to regulation, uridylyltransferase (UTase) activity is inhibited by glutamine, while glutamine activates uridylyl-removing (UR) activity. Modifies, by uridylylation and deuridylylation, the PII regulatory proteins (GlnB and homologs), in response to the nitrogen status of the cell that GlnD senses through the glutamine level. Under low glutamine levels, catalyzes the conversion of the PII proteins and UTP to PII-UMP and PPi, while under higher glutamine levels, GlnD hydrolyzes PII-UMP to PII and UMP (deuridylylation). Thus, controls uridylylation state and activity of the PII proteins, and plays an important role in the regulation of nitrogen assimilation and metabolism. The protein is Bifunctional uridylyltransferase/uridylyl-removing enzyme of Allorhizobium ampelinum (strain ATCC BAA-846 / DSM 112012 / S4) (Agrobacterium vitis (strain S4)).